Here is a 430-residue protein sequence, read N- to C-terminus: Mucorpepsin (430 aa).

An N-terminal signal peptide occupies residues 1 to 22 (MLFSQITSAILLTAASLSLTTA). The propeptide at 23–69 (RPVSKQSESKDKLLALPLTSVSRKFSQTKFGQQQLAEKLAGLKPFSE) is activation peptide. One can recognise a Peptidase A1 domain in the interval 89–421 (YAIPVSIGTP…DFGNNRIGFA (333 aa)). Asp107 is an active-site residue. Cys120 and Cys126 are disulfide-bonded. 2 N-linked (GlcNAc...) asparagine glycosylation sites follow: Asn148 and Asn257. Asp306 is a catalytic residue. Cys341 and Cys385 are joined by a disulfide.

This sequence belongs to the peptidase A1 family.

The enzyme catalyses Hydrolysis of proteins, favoring hydrophobic residues at P1 and P1'. Clots milk. Does not accept Lys at P1, and hence does not activate trypsinogen.. In terms of biological role, this enzyme, capable of clotting milk is frequently used for cheese production. The protein is Mucorpepsin of Rhizomucor miehei.